The sequence spans 458 residues: UDP-N-acetylmuramate--L-alanine ligase (458 aa).

Residue 115–121 participates in ATP binding; it reads GSHGKTT.

The protein belongs to the MurCDEF family.

Its subcellular location is the cytoplasm. The enzyme catalyses UDP-N-acetyl-alpha-D-muramate + L-alanine + ATP = UDP-N-acetyl-alpha-D-muramoyl-L-alanine + ADP + phosphate + H(+). It functions in the pathway cell wall biogenesis; peptidoglycan biosynthesis. Its function is as follows. Cell wall formation. The chain is UDP-N-acetylmuramate--L-alanine ligase from Anaeromyxobacter sp. (strain Fw109-5).